A 393-amino-acid polypeptide reads, in one-letter code: DNA-directed RNA polymerase subunit Rpo1C (393 aa).

Belongs to the RNA polymerase beta' chain family. Part of the RNA polymerase complex.

It is found in the cytoplasm. It catalyses the reaction RNA(n) + a ribonucleoside 5'-triphosphate = RNA(n+1) + diphosphate. In terms of biological role, DNA-dependent RNA polymerase (RNAP) catalyzes the transcription of DNA into RNA using the four ribonucleoside triphosphates as substrates. Forms part of the jaw domain. The protein is DNA-directed RNA polymerase subunit Rpo1C of Thermococcus celer.